Here is a 299-residue protein sequence, read N- to C-terminus: Zinc import ATP-binding protein ZnuC (299 aa).

Residues 13–228 (VSLANAGVQR…PEYMRLFGGT (216 aa)) enclose the ABC transporter domain. Residue 45-52 (GPNGSGKS) coordinates ATP.

It belongs to the ABC transporter superfamily. Zinc importer (TC 3.A.1.15.5) family. As to quaternary structure, the complex is composed of two ATP-binding proteins (ZnuC), two transmembrane proteins (ZnuB) and a solute-binding protein (ZnuA).

The protein resides in the cell inner membrane. The catalysed reaction is Zn(2+)(out) + ATP(in) + H2O(in) = Zn(2+)(in) + ADP(in) + phosphate(in) + H(+)(in). Its function is as follows. Part of the ABC transporter complex ZnuABC involved in zinc import. Responsible for energy coupling to the transport system. This is Zinc import ATP-binding protein ZnuC from Agrobacterium fabrum (strain C58 / ATCC 33970) (Agrobacterium tumefaciens (strain C58)).